The sequence spans 317 residues: MVKETVTVAKTCSHCGHNGHNARTCLNGVNKASVKLFGVNISSDPIRPPEVTALRKSLSLGNLDALLANDESNGSGDPIAAVDDTGYHSDGQIHSKKGKTAHEKKKGKPWTEEEHRNFLIGLNKLGKGDWRGIAKSFVSTRTPTQVASHAQKYFIRLNVNDKRKRRASLFDISLEDQKEKERNSQDASTKTPPKQPITGIQQPVVQGHTQTEISNRFQNLSMEYMPIYQPIPPYYNFPPIMYHPNYPMYYANPQVPVRFVHPSGIPVPRHIPIGLPLSQPSEASNMTNKDGLDLHIGLPPQATGASDLTGHGVIHVK.

The CCHC-type zinc-finger motif lies at C12 to C25. The segment at D77–T111 is disordered. The segment covering H94–K108 has biased composition (basic residues). One can recognise an HTH myb-type domain in the interval H102–N158. The H-T-H motif DNA-binding region spans W130 to F154. The segment at S173–Q206 is disordered. Residues E175–S184 show a composition bias toward basic and acidic residues. Residues Q185–Q206 are compositionally biased toward polar residues.

Its subcellular location is the nucleus. Its function is as follows. Probable transcription factor involved in somatic embryogenesis. Acts as a positive regulator of BHLH109. This chain is Probable transcription factor At5g61620, found in Arabidopsis thaliana (Mouse-ear cress).